The following is a 656-amino-acid chain: Mucin-20 (656 aa).

The N-terminal stretch at 1–21 (MGSVWGLAVPLLVFCWKVGVS) is a signal peptide. 3 stretches are compositionally biased toward polar residues: residues 85-96 (ATSISSEVNSRD), 114-125 (PAASSLEAQTTS), and 159-170 (TTSPAPSFLDTQ). Disordered stretches follow at residues 85-125 (ATSI…QTTS), 159-232 (TTSP…TQTI), and 329-348 (YLSS…LSSS). A compositionally biased stretch (low complexity) spans 171–227 (TTSPEPSSLTTSPAPSSLITSPTPSSLTTSPAPSFLDTQTTSPAPSSLTTSPAPSSL). 5 consecutive repeat copies span residues 180-188 (TTSPAPSSL), 189-197 (ITSPTPSSL), 198-206 (TTSPAPSFL), 210-218 (TTSPAPSSL), and 219-227 (TTSPAPSSL). An approximate repeats region spans residues 180–227 (TTSPAPSSLITSPTPSSLTTSPAPSFLDTQTTSPAPSSLTTSPAPSSL). Residues Asn-366 and Asn-570 are each glycosylated (N-linked (GlcNAc...) asparagine). An involved in oligomerization region spans residues 399-603 (TAALFTSEIL…WIRKTTKHDP (205 aa)). Over residues 560–573 (STTASTSKNPNITL) the composition is skewed to polar residues. A disordered region spans residues 560–592 (STTASTSKNPNITLTKTTASPKPPTHPTTSAST). Residues 604–656 (GEDGGFLLVRLTVASPKDLTEHNAREKLMNQLRRELHARMPLVHMSFLSIRRG) form an interaction with MET region.

As to quaternary structure, interacts with MET; oligomerization increases affinity for MET. Highly expressed in kidney. Up-regulated in renal tissues during renal injury.

The protein resides in the secreted. The protein localises to the apical cell membrane. It is found in the basolateral cell membrane. Its subcellular location is the cell projection. It localises to the microvillus membrane. In terms of biological role, may regulate MET signaling cascade. Seems to decrease hepatocyte growth factor (HGF)-induced transient MAPK activation. Blocks GRB2 recruitment to MET thus suppressing the GRB2-RAS pathway. Inhibits HGF-induced proliferation of MMP1 and MMP9 expression. This is Mucin-20 (Muc20) from Mus musculus (Mouse).